The sequence spans 360 residues: Phospho-N-acetylmuramoyl-pentapeptide-transferase (360 aa).

10 helical membrane-spanning segments follow: residues 21 to 41, 73 to 93, 94 to 114, 132 to 152, 168 to 188, 199 to 219, 235 to 255, 263 to 283, 288 to 308, and 338 to 358; these read YITV…LWIG, TMGG…WANL, ANPY…IGFV, WKYF…YAIG, IMPQ…VGTS, GLAI…AWAT, FSAE…GFLW, VFMG…VAVL, FLLV…ILQV, and VIVR…VTLK.

Belongs to the glycosyltransferase 4 family. MraY subfamily. It depends on Mg(2+) as a cofactor.

It localises to the cell inner membrane. The enzyme catalyses UDP-N-acetyl-alpha-D-muramoyl-L-alanyl-gamma-D-glutamyl-meso-2,6-diaminopimeloyl-D-alanyl-D-alanine + di-trans,octa-cis-undecaprenyl phosphate = di-trans,octa-cis-undecaprenyl diphospho-N-acetyl-alpha-D-muramoyl-L-alanyl-D-glutamyl-meso-2,6-diaminopimeloyl-D-alanyl-D-alanine + UMP. The protein operates within cell wall biogenesis; peptidoglycan biosynthesis. In terms of biological role, catalyzes the initial step of the lipid cycle reactions in the biosynthesis of the cell wall peptidoglycan: transfers peptidoglycan precursor phospho-MurNAc-pentapeptide from UDP-MurNAc-pentapeptide onto the lipid carrier undecaprenyl phosphate, yielding undecaprenyl-pyrophosphoryl-MurNAc-pentapeptide, known as lipid I. The chain is Phospho-N-acetylmuramoyl-pentapeptide-transferase from Pasteurella multocida (strain Pm70).